Reading from the N-terminus, the 229-residue chain is Large ribosomal subunit protein uL1 (229 aa).

The protein belongs to the universal ribosomal protein uL1 family. As to quaternary structure, part of the 50S ribosomal subunit.

Binds directly to 23S rRNA. The L1 stalk is quite mobile in the ribosome, and is involved in E site tRNA release. In terms of biological role, protein L1 is also a translational repressor protein, it controls the translation of the L11 operon by binding to its mRNA. This is Large ribosomal subunit protein uL1 from Actinobacillus pleuropneumoniae serotype 5b (strain L20).